The primary structure comprises 303 residues: Aspartate carbamoyltransferase catalytic subunit (303 aa).

Residues R51 and T52 each contribute to the carbamoyl phosphate site. Residue K80 participates in L-aspartate binding. Residues R101, H129, and Q132 each coordinate carbamoyl phosphate. Residues R162 and R221 each contribute to the L-aspartate site. Carbamoyl phosphate-binding residues include L260 and P261.

The protein belongs to the aspartate/ornithine carbamoyltransferase superfamily. ATCase family. Heterooligomer of catalytic and regulatory chains.

The enzyme catalyses carbamoyl phosphate + L-aspartate = N-carbamoyl-L-aspartate + phosphate + H(+). It functions in the pathway pyrimidine metabolism; UMP biosynthesis via de novo pathway; (S)-dihydroorotate from bicarbonate: step 2/3. Catalyzes the condensation of carbamoyl phosphate and aspartate to form carbamoyl aspartate and inorganic phosphate, the committed step in the de novo pyrimidine nucleotide biosynthesis pathway. This Saccharolobus islandicus (strain M.16.4 / Kamchatka #3) (Sulfolobus islandicus) protein is Aspartate carbamoyltransferase catalytic subunit.